Consider the following 967-residue polypeptide: Translation initiation factor IF-2 (967 aa).

Disordered regions lie at residues 201–320 (KPIV…PGFV) and 349–382 (LQGKGNKSKAAKYRRDKRDTHRQKSDDEQRELEA). The segment covering 233-248 (TGPTFSGQTIDLSQFN) has biased composition (polar residues). The segment covering 256–272 (PNKGGAKPAGAGNNNNN) has biased composition (low complexity). Over residues 354–363 (NKSKAAKYRR) the composition is skewed to basic residues. Residues 364-382 (DKRDTHRQKSDDEQRELEA) are compositionally biased toward basic and acidic residues. The region spanning 465-635 (HRAPIVTVMG…LLEAEVLDLK (171 aa)) is the tr-type G domain. The interval 474-481 (GHVDHGKT) is G1. 474-481 (GHVDHGKT) contacts GTP. The segment at 499–503 (GITQH) is G2. The segment at 521 to 524 (DTPG) is G3. GTP contacts are provided by residues 521–525 (DTPGH) and 575–578 (NKVD). Residues 575-578 (NKVD) are G4. A G5 region spans residues 611–613 (SAK).

The protein belongs to the TRAFAC class translation factor GTPase superfamily. Classic translation factor GTPase family. IF-2 subfamily.

It is found in the cytoplasm. Its function is as follows. One of the essential components for the initiation of protein synthesis. Protects formylmethionyl-tRNA from spontaneous hydrolysis and promotes its binding to the 30S ribosomal subunits. Also involved in the hydrolysis of GTP during the formation of the 70S ribosomal complex. The chain is Translation initiation factor IF-2 from Flavobacterium psychrophilum (strain ATCC 49511 / DSM 21280 / CIP 103535 / JIP02/86).